A 456-amino-acid chain; its full sequence is Solute carrier family 49 member 4 homolog (456 aa).

The Cytoplasmic portion of the chain corresponds to 1 to 29 (MGLEWSSPGERQPLLYPGGPRAPRVFGRR). A Di-leucine motif; mediates lysosomal localization motif is present at residues 14 to 15 (LL). A helical transmembrane segment spans residues 30 to 50 (WLVLLLFSLLAFLQGLVWNSW). Over 51 to 67 (GPIQNSARTAYNFSGLD) the chain is Lumenal. An N-linked (GlcNAc...) asparagine glycan is attached at asparagine 62. Residues 68 to 88 (IALLVLWGPIGFLPCFLFMWL) traverse the membrane as a helical segment. Topologically, residues 89-95 (MDNRGLR) are cytoplasmic. A helical transmembrane segment spans residues 96-116 (VTVLLTALLMVLGAGLRCVPV). Residues 117–131 (QDLAVRRKLIHGGQL) are Lumenal-facing. Residues 132 to 152 (LNGFAGPTVMNAAPFLSTTWF) traverse the membrane as a helical segment. The Cytoplasmic portion of the chain corresponds to 153 to 162 (SPDERATATA). The chain crosses the membrane as a helical span at residues 163–183 (IASMLSYLGGACAFLVGPLVV). Residues 184 to 207 (PAPNSTSGLLLYSGSVGAIRDRIE) are Lumenal-facing. A glycan (N-linked (GlcNAc...) asparagine) is linked at asparagine 187. Residues 208–228 (AVMYAEFGIIFVVFAAILAYF) traverse the membrane as a helical segment. Residues 229 to 259 (PSRPPVPPSVAAASRRLSYRTSILRLLSNVR) lie on the Cytoplasmic side of the membrane. Residues 260-280 (FLLIVLAYAIPLGFYAGWSGV) traverse the membrane as a helical segment. The Lumenal segment spans residues 281-292 (LDLILTPVHVTQ). The helical transmembrane segment at 293–313 (VDAGWVGFWSIVGGCVVGIAV) threads the bilayer. Over 314-326 (GRFADSIRGVLKP) the chain is Cytoplasmic. The chain crosses the membrane as a helical span at residues 327–347 (ILLLLFSGAALSSTWFTLTFL). At 348–362 (SNVTHLPLTTATLYT) the chain is on the lumenal side. N-linked (GlcNAc...) asparagine glycosylation occurs at asparagine 349. A helical membrane pass occupies residues 363-383 (SCILIGVFLSGTVPIFFEMFV). The Cytoplasmic portion of the chain corresponds to 384-392 (ETVYPIPEG). The chain crosses the membrane as a helical span at residues 393–413 (ITCGVVTFLSNLFMGVLLLFL). Residues 414–420 (TLYQTNL) are Lumenal-facing. Asparagine 419 is a glycosylation site (N-linked (GlcNAc...) asparagine). Residues 421-441 (SWLNWCLTGSCFLSLLFIACF) form a helical membrane-spanning segment. Topologically, residues 442-456 (RESYDRLYLDVFVSV) are cytoplasmic.

It belongs to the major facilitator superfamily.

It is found in the lysosome membrane. The enzyme catalyses pyridoxine(out) + n H(+)(out) = pyridoxine(in) + n H(+)(in). Functionally, mediates H(+)-dependent pyridoxine transport. This is Solute carrier family 49 member 4 homolog (slc49a4) from Xenopus tropicalis (Western clawed frog).